The sequence spans 88 residues: Small ribosomal subunit protein uS17 (88 aa).

The protein belongs to the universal ribosomal protein uS17 family. As to quaternary structure, part of the 30S ribosomal subunit.

Functionally, one of the primary rRNA binding proteins, it binds specifically to the 5'-end of 16S ribosomal RNA. This chain is Small ribosomal subunit protein uS17, found in Synechococcus sp. (strain CC9311).